Here is a 304-residue protein sequence, read N- to C-terminus: DCN1-like protein 3 (304 aa).

Disordered stretches follow at residues 1–87 (MGQC…EESS) and 285–304 (VEGRGALSSGPEGLCPEEQT). Glycine 2 carries the N-myristoyl glycine lipid modification. Positions 86-278 (SSLQRLEELF…LFDTFVEWEM (193 aa)) constitute a DCUN1 domain.

Part of a complex containing DCUN1D3, CUL3 and RBX1. Interacts (via the DCUN1 domain) with the unneddylated cullins: interacts with CUL1, CUL2, CUL3, CUL4A, CUL4B and CUL5; these interactions promote the cullin neddylation and the identity of the cullin dictates the affinity of the interaction. Interacts preferentially with CUL3; this interaction triggers the relocalization of CUL3 to the cell membrane where CUL3 is neddylated. Interacts (via DCUN1 domain) with RBX1. May also interact with regulators or subunits of cullin-RING ligases such as RNF7, ELOB and DDB1; these interactions are bridged by cullins. Interacts (via DCUN1 domain) with CAND1; this interaction is bridged by cullins and strongly inhibits cullin neddylation. These CAND-cullin-DCNL complexes can only be neddylated in the presence of a substrate adapter. Interacts (via DCUN1 domain) with the N-terminally acetylated form of UBE2M and UBE2F.

The protein resides in the cell membrane. It is found in the cytoplasm. It localises to the nucleus. The protein localises to the perinuclear region. In terms of biological role, contributes to the neddylation of all cullins by transferring NEDD8 from N-terminally acetylated NEDD8-conjugating E2s enzyme to different cullin C-terminal domain-RBX complexes and may play a role in the cell cycle progression by regulating the SCF ubiquitin E3 ligase complex, after UV damage. At the cell membrane, can promote and as well inhibit cullins neddylation. The sequence is that of DCN1-like protein 3 from Rattus norvegicus (Rat).